Here is a 395-residue protein sequence, read N- to C-terminus: Small RNA 2'-O-methyltransferase (395 aa).

Residues aspartate 79 and serine 115 each contribute to the S-adenosyl-L-methionine site. Positions 133, 136, 137, and 182 each coordinate Mg(2+).

This sequence belongs to the methyltransferase superfamily. HEN1 family. Mg(2+) serves as cofactor. In terms of tissue distribution, specifically expressed in testis.

The protein resides in the cytoplasm. It catalyses the reaction small RNA 3'-end nucleotide + S-adenosyl-L-methionine = small RNA 3'-end 2'-O-methylnucleotide + S-adenosyl-L-homocysteine + H(+). Methyltransferase that adds a 2'-O-methyl group at the 3'-end of piRNAs, a class of 24 to 30 nucleotide RNAs that are generated by a Dicer-independent mechanism and are primarily derived from transposons and other repeated sequence elements. This probably protects the 3'-end of piRNAs from uridylation activity and subsequent degradation. Stabilization of piRNAs is essential for gametogenesis. This Mus musculus (Mouse) protein is Small RNA 2'-O-methyltransferase (Henmt1).